The sequence spans 40 residues: Auxin-responsive endogenous peptide 1 (40 aa).

The helical transmembrane segment at leucine 7–histidine 29 threads the bilayer.

Expressed in cotyledons, hypocotyls, roots, newly developing leaves and shoot apical meristem. Not detected in flowers, siliques or mature leaves.

It localises to the cytoplasm. The protein localises to the nucleus. The protein resides in the membrane. Functionally, negative regulator of the auxin response. The sequence is that of Auxin-responsive endogenous peptide 1 from Arabidopsis thaliana (Mouse-ear cress).